The chain runs to 210 residues: Large ribosomal subunit protein uL4 (210 aa).

The segment at 46–96 (QGNASTKTRAEVRGGGRKPWRQKGTGRARAGSNRSPLWRGGGVIFGPKPRD) is disordered. Over residues 60–71 (GGRKPWRQKGTG) the composition is skewed to basic residues.

Belongs to the universal ribosomal protein uL4 family. As to quaternary structure, part of the 50S ribosomal subunit.

Its function is as follows. One of the primary rRNA binding proteins, this protein initially binds near the 5'-end of the 23S rRNA. It is important during the early stages of 50S assembly. It makes multiple contacts with different domains of the 23S rRNA in the assembled 50S subunit and ribosome. In terms of biological role, forms part of the polypeptide exit tunnel. The polypeptide is Large ribosomal subunit protein uL4 (Gloeothece citriformis (strain PCC 7424) (Cyanothece sp. (strain PCC 7424))).